The following is a 127-amino-acid chain: UPF0102 protein Mmwyl1_2395 (127 aa).

Belongs to the UPF0102 family.

This is UPF0102 protein Mmwyl1_2395 from Marinomonas sp. (strain MWYL1).